We begin with the raw amino-acid sequence, 300 residues long: Ribosomal protein bS6--L-glutamate ligase (300 aa).

Residues 104 to 287 (MQLLARQGID…IAGKMIRWIE (184 aa)) form the ATP-grasp domain. ATP-binding positions include lysine 141, 178-179 (EY), aspartate 187, and 211-213 (RSN). Mg(2+)-binding residues include aspartate 248, glutamate 260, and asparagine 262. Mn(2+)-binding residues include aspartate 248, glutamate 260, and asparagine 262.

Belongs to the RimK family. Requires Mg(2+) as cofactor. The cofactor is Mn(2+).

Its function is as follows. An L-glutamate ligase that catalyzes the ATP-dependent post-translational addition of glutamate residues to the C-terminus of ribosomal protein bS6 (RpsF). Is also able to catalyze the synthesis of poly-alpha-glutamate in vitro, via ATP hydrolysis from unprotected glutamate as substrate. The number of glutamate residues added to either RpsF or to poly-alpha-glutamate changes with pH. This is Ribosomal protein bS6--L-glutamate ligase from Escherichia coli O139:H28 (strain E24377A / ETEC).